The primary structure comprises 124 residues: Apolipoprotein C-IV (124 aa).

An N-terminal signal peptide occupies residues 1 to 27 (MSLLRCRQQTLPSLCLSVLFLACFVAS).

The protein belongs to the apolipoprotein C4 family.

Its subcellular location is the secreted. Its function is as follows. May participate in lipoprotein metabolism. The polypeptide is Apolipoprotein C-IV (Apoc4) (Rattus norvegicus (Rat)).